A 137-amino-acid polypeptide reads, in one-letter code: Phosphoribosyl-AMP cyclohydrolase (137 aa).

Aspartate 84 serves as a coordination point for Mg(2+). Residue cysteine 85 participates in Zn(2+) binding. Mg(2+)-binding residues include aspartate 86 and aspartate 88. Zn(2+)-binding residues include cysteine 101 and cysteine 108.

Belongs to the PRA-CH family. In terms of assembly, homodimer. Mg(2+) serves as cofactor. The cofactor is Zn(2+).

It is found in the cytoplasm. The catalysed reaction is 1-(5-phospho-beta-D-ribosyl)-5'-AMP + H2O = 1-(5-phospho-beta-D-ribosyl)-5-[(5-phospho-beta-D-ribosylamino)methylideneamino]imidazole-4-carboxamide. It functions in the pathway amino-acid biosynthesis; L-histidine biosynthesis; L-histidine from 5-phospho-alpha-D-ribose 1-diphosphate: step 3/9. Catalyzes the hydrolysis of the adenine ring of phosphoribosyl-AMP. The chain is Phosphoribosyl-AMP cyclohydrolase from Chlorobaculum parvum (strain DSM 263 / NCIMB 8327) (Chlorobium vibrioforme subsp. thiosulfatophilum).